We begin with the raw amino-acid sequence, 429 residues long: Adenylosuccinate synthetase (429 aa).

GTP contacts are provided by residues 12–18 (GDEGKGK) and 40–42 (GHT). Asp13 acts as the Proton acceptor in catalysis. Asp13 and Gly40 together coordinate Mg(2+). IMP contacts are provided by residues 13–16 (DEGK), 38–41 (NAGH), Thr129, Arg143, Gln223, Thr238, and Arg302. Residue His41 is the Proton donor of the active site. 298–304 (TVTGRKR) serves as a coordination point for substrate. Residues Arg304, 330 to 332 (KLD), and 412 to 414 (STS) contribute to the GTP site.

This sequence belongs to the adenylosuccinate synthetase family. As to quaternary structure, homodimer. Requires Mg(2+) as cofactor.

It is found in the cytoplasm. It catalyses the reaction IMP + L-aspartate + GTP = N(6)-(1,2-dicarboxyethyl)-AMP + GDP + phosphate + 2 H(+). The protein operates within purine metabolism; AMP biosynthesis via de novo pathway; AMP from IMP: step 1/2. Functionally, plays an important role in the de novo pathway of purine nucleotide biosynthesis. Catalyzes the first committed step in the biosynthesis of AMP from IMP. This Rhizorhabdus wittichii (strain DSM 6014 / CCUG 31198 / JCM 15750 / NBRC 105917 / EY 4224 / RW1) (Sphingomonas wittichii) protein is Adenylosuccinate synthetase.